A 277-amino-acid chain; its full sequence is MENSENSVDAKSIKNSETKIFHGSKSMDSGIYMDNSYKMDYPEMGLCIIINNKNFHESTGMPSRSGTDVDAANLRETFTNLKYEVRNKNDLTREQIVALLDSVSREDHSKRSSFICVLLSHGEEGIIYGTNGPVDLKKLTGFFRGDYCRSLTGKPKLFIIQACRGTELDCGIETDSGTEDDIACQKIPVEADFLYAYSTAPGYYSWRNSKDGSWFIQSLCSMLRLYAHELEFMHILTRVNRKVATEFESFSLDSAFHGKKQIPCIVSMLTKELYFYH.

At Met-1 the chain carries N-acetylmethionine. Propeptides lie at residues 1-9 and 10-28; these read MENSENSVD and AKSIKNSETKIFHGSKSMD. At Lys-11 the chain carries N6-acetyllysine. Ser-26 is subject to Phosphoserine. Catalysis depends on residues His-121 and Cys-163. At Cys-163 the chain carries S-nitrosocysteine; in inhibited form.

This sequence belongs to the peptidase C14A family. In terms of assembly, heterotetramer that consists of two anti-parallel arranged heterodimers, each one formed by a 17 kDa (p17) and a 12 kDa (p12) subunit. Interacts with BIRC6/bruce. Cleavage by granzyme B, caspase-6, caspase-8 and caspase-10 generates the two active subunits. Additional processing of the propeptides is likely due to the autocatalytic activity of the activated protease. Active heterodimers between the small subunit of caspase-7 protease and the large subunit of caspase-3 also occur and vice versa. Post-translationally, S-nitrosylated on its catalytic site cysteine in unstimulated cell lines and denitrosylated upon activation of the Fas apoptotic pathway, associated with an increase in intracellular caspase activity. Fas therefore activates caspase-3 not only by inducing the cleavage of the caspase zymogen to its active subunits, but also by stimulating the denitrosylation of its active site thiol. In terms of processing, ubiquitinated by BIRC6; this activity is inhibited by DIABLO/SMAC.

Its subcellular location is the cytoplasm. It carries out the reaction Strict requirement for an Asp residue at positions P1 and P4. It has a preferred cleavage sequence of Asp-Xaa-Xaa-Asp-|- with a hydrophobic amino-acid residue at P2 and a hydrophilic amino-acid residue at P3, although Val or Ala are also accepted at this position.. Its activity is regulated as follows. Inhibited by BIRC6; following inhibition of BIRC6-caspase binding by DIABLO/SMAC, BIRC6 is subjected to caspase cleavage, leading to an increase in active caspases. Functionally, involved in the activation cascade of caspases responsible for apoptosis execution. At the onset of apoptosis, it proteolytically cleaves poly(ADP-ribose) polymerase PARP1 at a '216-Asp-|-Gly-217' bond. Cleaves and activates sterol regulatory element binding proteins (SREBPs) between the basic helix-loop-helix leucine zipper domain and the membrane attachment domain. Cleaves and activates caspase-6, -7 and -9 (CASP6, CASP7 and CASP9, respectively). Cleaves and inactivates interleukin-18 (IL18). Triggers cell adhesion in sympathetic neurons through RET cleavage. Cleaves IL-1 beta between an Asp and an Ala, releasing the mature cytokine which is involved in a variety of inflammatory processes. Cleaves and inhibits serine/threonine-protein kinase AKT1 in response to oxidative stress. Acts as an inhibitor of type I interferon production during virus-induced apoptosis by mediating cleavage of antiviral proteins CGAS, IRF3 and MAVS, thereby preventing cytokine overproduction. Also involved in pyroptosis by mediating cleavage and activation of gasdermin-E (GSDME). Cleaves XRCC4 and phospholipid scramblase proteins XKR4, XKR8 and XKR9, leading to promote phosphatidylserine exposure on apoptotic cell surface. Cleaves BIRC6 following inhibition of BIRC6-caspase binding by DIABLO/SMAC. This chain is Caspase-3 (CASP3), found in Felis catus (Cat).